The primary structure comprises 604 residues: Procollagen galactosyltransferase 1 (604 aa).

A signal peptide spans 1-18 (MHLLCFFFLLLWTGPARS). N78, N166, N363, and N561 each carry an N-linked (GlcNAc...) asparagine glycan. Over residues 570 to 580 (RARSRKSREQE) the composition is skewed to basic and acidic residues. A disordered region spans residues 570-604 (RARSRKSREQEELSSEAQNTDVLQSPLDSTARDEL). The segment covering 584–597 (SEAQNTDVLQSPLD) has biased composition (polar residues). The Prevents secretion from ER signature appears at 601 to 604 (RDEL).

Belongs to the glycosyltransferase 25 family.

The protein localises to the endoplasmic reticulum lumen. The enzyme catalyses (5R)-5-hydroxy-L-lysyl-[collagen] + UDP-alpha-D-galactose = (5R)-5-O-(beta-D-galactosyl)-5-hydroxy-L-lysyl-[collagen] + UDP + H(+). Beta-galactosyltransferase that transfers beta-galactose to hydroxylysine residues of type I collagen. By acting on collagen glycosylation, facilitates the formation of collagen triple helix. The chain is Procollagen galactosyltransferase 1 (colgalt1) from Danio rerio (Zebrafish).